We begin with the raw amino-acid sequence, 179 residues long: Large ribosomal subunit protein uL5 (179 aa).

It belongs to the universal ribosomal protein uL5 family. In terms of assembly, part of the 50S ribosomal subunit; part of the 5S rRNA/L5/L18/L25 subcomplex. Contacts the 5S rRNA and the P site tRNA. Forms a bridge to the 30S subunit in the 70S ribosome.

In terms of biological role, this is one of the proteins that bind and probably mediate the attachment of the 5S RNA into the large ribosomal subunit, where it forms part of the central protuberance. In the 70S ribosome it contacts protein S13 of the 30S subunit (bridge B1b), connecting the 2 subunits; this bridge is implicated in subunit movement. Contacts the P site tRNA; the 5S rRNA and some of its associated proteins might help stabilize positioning of ribosome-bound tRNAs. In Buchnera aphidicola subsp. Cinara cedri (strain Cc), this protein is Large ribosomal subunit protein uL5.